A 692-amino-acid polypeptide reads, in one-letter code: Putative ESX-1 scaffolding and assembly protein SaeA (692 aa).

A compositionally biased stretch (basic and acidic residues) spans 1–21 (MGERGELVSDLHPSDDHDADP). Disordered stretches follow at residues 1–23 (MGERGELVSDLHPSDDHDADPRL) and 87–134 (PAAP…TTGF). The segment covering 89-107 (APEPDPPPVPEPQPEPEPG) has biased composition (pro residues).

May be involved in assembly of the ESX-1 / type VII specialized secretion system (T7SS), which exports several proteins including EsxA and EsxB. Involved in DNA conjugation in recipient (MKD8) but not donor (mc(2)155) strain. This Mycolicibacterium smegmatis (strain MKD8) (Mycobacterium smegmatis) protein is Putative ESX-1 scaffolding and assembly protein SaeA (saeA).